The primary structure comprises 283 residues: Foldase protein PrsA 3 (283 aa).

A signal peptide spans 1-21 (MKKKKIFIGTIISCVMLALSA). Residue Cys-22 is the site of N-palmitoyl cysteine attachment. Cys-22 carries S-diacylglycerol cysteine lipidation. The region spanning 132-222 (KPEMKVSHIL…YGYHIIKVTD (91 aa)) is the PpiC domain.

Belongs to the PrsA family.

The protein resides in the cell membrane. It catalyses the reaction [protein]-peptidylproline (omega=180) = [protein]-peptidylproline (omega=0). Plays a major role in protein secretion by helping the post-translocational extracellular folding of several secreted proteins. The chain is Foldase protein PrsA 3 (prsA3) from Bacillus cereus (strain ATCC 14579 / DSM 31 / CCUG 7414 / JCM 2152 / NBRC 15305 / NCIMB 9373 / NCTC 2599 / NRRL B-3711).